Consider the following 87-residue polypeptide: Defensin-like protein 81 (87 aa).

Positions 1 to 27 are cleaved as a signal peptide; it reads MTIKKFLPLLLSSLMVYSLILLPIISG. Intrachain disulfides connect Cys33–Cys69, Cys37–Cys57, Cys43–Cys67, and Cys47–Cys68.

This sequence belongs to the DEFL family.

The protein localises to the secreted. In Arabidopsis thaliana (Mouse-ear cress), this protein is Defensin-like protein 81.